The primary structure comprises 337 residues: Probable uridine nucleosidase 2 (337 aa).

His-260 is an active-site residue.

This sequence belongs to the IUNH family.

It localises to the cytoplasm. It catalyses the reaction uridine + H2O = D-ribose + uracil. Functionally, involved in pyrimidine breakdown. The protein is Probable uridine nucleosidase 2 (URH2) of Oryza sativa subsp. japonica (Rice).